The sequence spans 60 residues: Metallothionein (60 aa).

Met-1 carries the N-acetylmethionine modification. Positions 1–28 (MDPCECSKTGTCNCGGSCTCKNCSCTTC) are beta. Residues Cys-4, Cys-6, Cys-12, Cys-14, Cys-18, Cys-20, Cys-23, Cys-25, Cys-28, Cys-32, Cys-33, Cys-35, Cys-36, Cys-40, Cys-43, Cys-47, Cys-49, Cys-54, Cys-58, and Cys-59 each coordinate a divalent metal cation. An alpha region spans residues 29-60 (NKSCCPCCPSGCPKCASGCVCKGKTCDTSCCQ).

It belongs to the metallothionein superfamily. Type 1 family.

Metallothioneins have a high content of cysteine residues that bind various heavy metals. This is Metallothionein (mt) from Pleuronectes platessa (European plaice).